The primary structure comprises 436 residues: Xylose isomerase (436 aa).

Active-site residues include histidine 100 and aspartate 103. 7 residues coordinate Mg(2+): glutamate 231, glutamate 267, histidine 270, aspartate 295, aspartate 306, aspartate 308, and aspartate 338.

It belongs to the xylose isomerase family. As to quaternary structure, homotetramer. Mg(2+) serves as cofactor.

Its subcellular location is the cytoplasm. The catalysed reaction is alpha-D-xylose = alpha-D-xylulofuranose. This chain is Xylose isomerase, found in Rhizobium etli (strain CIAT 652).